Consider the following 443-residue polypeptide: Major royal jelly protein 7 (443 aa).

A signal peptide spans methionine 1–glycine 17. 4 N-linked (GlcNAc...) asparagine glycosylation sites follow: asparagine 145, asparagine 161, asparagine 178, and asparagine 321.

Belongs to the major royal jelly protein family. Found in and secreted from the hypopharyngeal glands of the worker honey bee (at protein level); expression peaks at 12 days post eclosion. Expressed in the brains of adult worker bees peaking at 12 days post eclosion (at protein level). Expressed in the spermatheca of adult queen bees (at protein level); Expression levels are higher in mated queens than in virgin queens.

The protein resides in the secreted. Its function is as follows. Component of royal jelly, a substance produced in the hypopharyngeal gland containing proteins, free amino acids, fatty acids, sugars and other nutrients, which is fed to developing larvae by worker nurse bees. All larvae are fed some royal jelly (also known as worker jelly) early in their development but it forms the principal source of nutrition for larvae destined to become queen bees. Produced in the spermatheca of adult queen bees, along with other major royal jelly proteins, where it may act as a nutrient supply for sperm stored by mated queens, or be involved in energy metabolism. This Apis mellifera (Honeybee) protein is Major royal jelly protein 7.